The sequence spans 235 residues: Flagellar L-ring protein (235 aa).

The signal sequence occupies residues 1–18 (MNKIAGTLFLLAGLAMAG). Cysteine 19 is lipidated: N-palmitoyl cysteine. Cysteine 19 is lipidated: S-diacylglycerol cysteine.

It belongs to the FlgH family. As to quaternary structure, the basal body constitutes a major portion of the flagellar organelle and consists of four rings (L,P,S, and M) mounted on a central rod.

It localises to the cell outer membrane. It is found in the bacterial flagellum basal body. Functionally, assembles around the rod to form the L-ring and probably protects the motor/basal body from shearing forces during rotation. The chain is Flagellar L-ring protein from Chelativorans sp. (strain BNC1).